Reading from the N-terminus, the 546-residue chain is ATP synthase subunit alpha (546 aa).

173-180 (GDRQTGKT) is a binding site for ATP. Positions 520–546 (VDKKTAPKSVTPVDQEQIKAGKAQEKK) are disordered. A compositionally biased stretch (basic and acidic residues) spans 535-546 (EQIKAGKAQEKK).

Belongs to the ATPase alpha/beta chains family. As to quaternary structure, F-type ATPases have 2 components, CF(1) - the catalytic core - and CF(0) - the membrane proton channel. CF(1) has five subunits: alpha(3), beta(3), gamma(1), delta(1), epsilon(1). CF(0) has three main subunits: a(1), b(2) and c(9-12). The alpha and beta chains form an alternating ring which encloses part of the gamma chain. CF(1) is attached to CF(0) by a central stalk formed by the gamma and epsilon chains, while a peripheral stalk is formed by the delta and b chains.

It is found in the cell membrane. The catalysed reaction is ATP + H2O + 4 H(+)(in) = ADP + phosphate + 5 H(+)(out). In terms of biological role, produces ATP from ADP in the presence of a proton gradient across the membrane. The alpha chain is a regulatory subunit. This chain is ATP synthase subunit alpha, found in Bifidobacterium animalis subsp. lactis (strain AD011).